The chain runs to 394 residues: Large ribosomal subunit protein bL27m (394 aa).

The transit peptide at 1-34 directs the protein to the mitochondrion; sequence MSFIKQVGKLIRPNDYSSSIFQTSFLNNVIQVRT. Disordered stretches follow at residues 36–57 and 145–181; these read TKRA…LGPK and AEAE…QRAS. A compositionally biased stretch (basic and acidic residues) spans 145-170; it reads AEAEKEENHMSRKEFLQQPELEKTRQ.

This sequence belongs to the bacterial ribosomal protein bL27 family.

Its subcellular location is the mitochondrion. Its function is as follows. Component of the large subunit of mitochondrial ribosome. The polypeptide is Large ribosomal subunit protein bL27m (MRPL2) (Debaryomyces hansenii (strain ATCC 36239 / CBS 767 / BCRC 21394 / JCM 1990 / NBRC 0083 / IGC 2968) (Yeast)).